The following is a 369-amino-acid chain: N-succinyl-L-Arg/Lys racemase (369 aa).

Substrate-binding positions include Y26, D51, 161-163, and 191-193; these read KMK and DVN. Residues D191, E218, and D243 each coordinate Mg(2+). Substrate contacts are provided by residues K267, 295 to 296, and 320 to 322; these read SM and ELT.

This sequence belongs to the mandelate racemase/muconate lactonizing enzyme family. It depends on Mg(2+) as a cofactor.

Its function is as follows. Catalyzes efficient racemization of N-succinyl-L-Arg and N-succinyl-L-Lys, suggesting that these are physiological substrates of this enzyme. Has low activity with L-Asp-L-Lys, and even lower activity with L-Leu-L-Arg, L-Leu-L-Lys, N-succinyl-L-His and N-succinyl-L-Met (in vitro). The polypeptide is N-succinyl-L-Arg/Lys racemase (Bacillus cereus (strain ATCC 14579 / DSM 31 / CCUG 7414 / JCM 2152 / NBRC 15305 / NCIMB 9373 / NCTC 2599 / NRRL B-3711)).